A 796-amino-acid chain; its full sequence is Ent-copalyl diphosphate synthase 4 (796 aa).

The transit peptide at 1 to 23 directs the protein to the chloroplast; that stretch reads MSSSSIVTSLLRPTTAADGVLPR. A substrate-binding site is contributed by K240. Mg(2+) contacts are provided by D371 and D373. A DXDD motif motif is present at residues 371–374; that stretch reads DVDD. Residue K457 coordinates substrate.

The protein belongs to the terpene synthase family. Tpsc subfamily. Mg(2+) is required as a cofactor. As to expression, highly expressed in leaves, and, at low levels, in stems, but barely in roots and flowers.

The protein resides in the plastid. Its subcellular location is the chloroplast. The catalysed reaction is (2E,6E,10E)-geranylgeranyl diphosphate = ent-copalyl diphosphate. It functions in the pathway secondary metabolite biosynthesis; terpenoid biosynthesis. In terms of biological role, involved in the biosynthesis of ent-kaurene diterpenoids natural products such as oridonin, miltiradiene, eriocalyxin B and nezukol, known to exhibit antitumor, anti-inflammatory and antibacterial activities. Catalyzes the conversion of (2E,6E,10E)-geranylgeranyl diphosphate (GGPP) to ent-copalyl diphosphate (ent-CPP). The polypeptide is Ent-copalyl diphosphate synthase 4 (Isodon rubescens (Rabdosia rubescens)).